Here is a 188-residue protein sequence, read N- to C-terminus: Elongation factor P (188 aa).

An N6-(3,6-diaminohexanoyl)-5-hydroxylysine modification is found at K34.

Belongs to the elongation factor P family. In terms of processing, may be beta-lysylated on the epsilon-amino group of Lys-34 by the combined action of EpmA and EpmB, and then hydroxylated on the C5 position of the same residue by EpmC (if this protein is present). Lysylation is critical for the stimulatory effect of EF-P on peptide-bond formation. The lysylation moiety may extend toward the peptidyltransferase center and stabilize the terminal 3-CCA end of the tRNA. Hydroxylation of the C5 position on Lys-34 may allow additional potential stabilizing hydrogen-bond interactions with the P-tRNA.

It localises to the cytoplasm. Its pathway is protein biosynthesis; polypeptide chain elongation. Functionally, involved in peptide bond synthesis. Alleviates ribosome stalling that occurs when 3 or more consecutive Pro residues or the sequence PPG is present in a protein, possibly by augmenting the peptidyl transferase activity of the ribosome. Modification of Lys-34 is required for alleviation. This is Elongation factor P from Coxiella burnetii (strain CbuG_Q212) (Coxiella burnetii (strain Q212)).